A 305-amino-acid polypeptide reads, in one-letter code: MNMQEVYEYLSTVLPEGHVKQDEMLKNHTHIKVGGKADVFVAPTNYDEIQEVIKYANKYNIPVTFLGNGSNVIIKDGGIRGITVSLIHITGVTVTGTTIVAQCGAAIIDVSRIALDHNLTGLEFACGIPGSVGGALYMNAGAYGGEISFVLTEAVVMTGDGELRTLTKEAFEFGYRKSVFANNHYIILEARFELEEGVYEEIKAKMDDLTFKRESKQPLEYPSCGSVFKRPPNNFAGKLIQESGLQGKRIGGVEVSLKHAGFMVNVDNGTAQDYIDLIHFVQKTVEEKFGVKLEREVRIIGEDKE.

The FAD-binding PCMH-type domain maps to 33–197 (VGGKADVFVA…LEARFELEEG (165 aa)). The active site involves R176. S226 functions as the Proton donor in the catalytic mechanism. Residue E296 is part of the active site.

It belongs to the MurB family. FAD is required as a cofactor.

It is found in the cytoplasm. It catalyses the reaction UDP-N-acetyl-alpha-D-muramate + NADP(+) = UDP-N-acetyl-3-O-(1-carboxyvinyl)-alpha-D-glucosamine + NADPH + H(+). The protein operates within cell wall biogenesis; peptidoglycan biosynthesis. Functionally, cell wall formation. This is UDP-N-acetylenolpyruvoylglucosamine reductase 2 (murB2) from Bacillus anthracis.